A 1008-amino-acid chain; its full sequence is Chitin synthase C (1008 aa).

A disordered region spans residues M1–R160. Residues R10 to N19 are compositionally biased toward low complexity. Over residues E34–N45 the composition is skewed to polar residues. N-linked (GlcNAc...) asparagine glycosylation occurs at N312. 5 helical membrane-spanning segments follow: residues F642–I662, I682–M702, I717–I737, L755–F775, and S787–C807. A glycan (N-linked (GlcNAc...) asparagine) is linked at N833. Transmembrane regions (helical) follow at residues M887 to G907 and A910 to I930. N961 is a glycosylation site (N-linked (GlcNAc...) asparagine).

This sequence belongs to the chitin synthase family. Class II subfamily.

The protein resides in the cell membrane. It carries out the reaction [(1-&gt;4)-N-acetyl-beta-D-glucosaminyl](n) + UDP-N-acetyl-alpha-D-glucosamine = [(1-&gt;4)-N-acetyl-beta-D-glucosaminyl](n+1) + UDP + H(+). Polymerizes chitin, a structural polymer of the cell wall and septum, by transferring the sugar moiety of UDP-GlcNAc to the non-reducing end of the growing chitin polymer. Involved in cell wall integrity and mycelial morphology. Plays an important role in septal growth or maintenance. Acts as a positive regulator of conidiation, cellular responses to oxidative stresses, and the production of malic acid. Negatively regulates the citric acid production. The sequence is that of Chitin synthase C from Aspergillus niger (strain ATCC MYA-4892 / CBS 513.88 / FGSC A1513).